A 146-amino-acid chain; its full sequence is Late protein OPG112 (146 aa).

A helical membrane pass occupies residues 10 to 32 (LAMTAFFGELSTLDIMALIMSIF).

The protein belongs to the orthopoxvirus OPG112 family.

It is found in the host membrane. Its subcellular location is the host cytoplasm. Contributes to the formation of crescents and immature virions (IV). Interacts with phosphatidylinositol-3-phosphate (PI3P) and phosphatidylinositol-4-phosphate (PI4P) lipids in order to form virion membranes. Mechanistically, mediates proper formation of OPG125-hexamers, and hence the honey comb lattice and spherical immature virus. The protein is Late protein OPG112 (OPG112) of Bos taurus (Bovine).